The primary structure comprises 920 residues: GTPase activating protein homolog 1 (920 aa).

Positions 65 to 87 (NLGGLSNDSTNNNSNSNNTIDSS) are enriched in low complexity. A disordered region spans residues 65–91 (NLGGLSNDSTNNNSNSNNTIDSSKPLS). Residues 90–344 (LSFENDMSDG…FVDIIDPEVD (255 aa)) form the F-BAR domain. Positions 184–276 (LNEAIKDMEK…EDEYKEQINE (93 aa)) form a coiled coil. The span at 403-449 (TNTITSQSGSTIISNGASQPIEIPSPQPISEQQQIPPQQQQQQQQAQ) shows a compositional bias: low complexity. Disordered regions lie at residues 403–468 (TNTI…PMGR) and 490–518 (STSS…LSKS). A compositionally biased stretch (polar residues) spans 450–468 (VPPTSINQSSSPPVNPMGR). Residues 490–513 (STSSLLTKDGNSTTSSNTSTSNSN) are compositionally biased toward low complexity. Positions 533-716 (VELEVLIEND…NMIIDSLETK (184 aa)) constitute a Rho-GAP domain. The disordered stretch occupies residues 727-836 (PIIPDDENSD…VSSNGNNINS (110 aa)). Acidic residues predominate over residues 730–741 (PDDENSDDDDDD). A compositionally biased stretch (low complexity) spans 757–836 (NDINTTNINN…VSSNGNNINS (80 aa)).

It localises to the cytoplasm. It is found in the contractile vacuole. Functionally, rho GTPase-activating protein involved in the signal transduction pathway. Regulator of the contractile vacuole network as well as involved in driving vacuole emptying. The chain is GTPase activating protein homolog 1 (mgp1) from Dictyostelium discoideum (Social amoeba).